Consider the following 309-residue polypeptide: Aspartate carbamoyltransferase catalytic subunit (309 aa).

Carbamoyl phosphate-binding residues include Arg56 and Thr57. Lys84 provides a ligand contact to L-aspartate. Carbamoyl phosphate contacts are provided by Arg106, His136, and Gln139. Residues Arg169 and Arg221 each contribute to the L-aspartate site. 2 residues coordinate carbamoyl phosphate: Ala264 and Pro265.

It belongs to the aspartate/ornithine carbamoyltransferase superfamily. ATCase family. Heterododecamer (2C3:3R2) of six catalytic PyrB chains organized as two trimers (C3), and six regulatory PyrI chains organized as three dimers (R2).

It carries out the reaction carbamoyl phosphate + L-aspartate = N-carbamoyl-L-aspartate + phosphate + H(+). It functions in the pathway pyrimidine metabolism; UMP biosynthesis via de novo pathway; (S)-dihydroorotate from bicarbonate: step 2/3. Catalyzes the condensation of carbamoyl phosphate and aspartate to form carbamoyl aspartate and inorganic phosphate, the committed step in the de novo pyrimidine nucleotide biosynthesis pathway. This is Aspartate carbamoyltransferase catalytic subunit from Limosilactobacillus reuteri subsp. reuteri (strain JCM 1112) (Lactobacillus reuteri).